The sequence spans 531 residues: Putative cysteine ligase BshC (531 aa).

The stretch at 447 to 481 (KAQEKKQTKGLDNLEKRLLKAEKKMHSEKLKKIIE) forms a coiled coil.

The protein belongs to the BshC family.

This is Putative cysteine ligase BshC from Flavobacterium psychrophilum (strain ATCC 49511 / DSM 21280 / CIP 103535 / JIP02/86).